The following is a 191-amino-acid chain: Cell division protein SepF (191 aa).

The segment covering 156 to 167 (EEASPSNMSNKG) has biased composition (polar residues). Residues 156 to 191 (EEASPSNMSNKGNDLISKETSPAPEPAWGETVATAL) form a disordered region.

The protein belongs to the SepF family. Homodimer. Interacts with FtsZ.

The protein localises to the cytoplasm. In terms of biological role, cell division protein that is part of the divisome complex and is recruited early to the Z-ring. Probably stimulates Z-ring formation, perhaps through the cross-linking of FtsZ protofilaments. Its function overlaps with FtsA. This Prochlorococcus marinus (strain NATL2A) protein is Cell division protein SepF.